The sequence spans 609 residues: Protein kinase PVPK-1 (609 aa).

Positions 1–19 are enriched in polar residues; that stretch reads MESSVNGVDSLSEVQNSVS. 2 disordered regions span residues 1-51 and 80-100; these read MESS…GHQT and PTKL…EPNG. The Protein kinase domain maps to 229 to 565; sequence FRLLKKLGCG…ATEIKQHPFF (337 aa). ATP is bound by residues 235 to 243 and K258; that span reads LGCGDIGSV. D354 (proton acceptor) is an active-site residue. The disordered stretch occupies residues 429-448; the sequence is GKSKKDKKSKPKNDMHNQVT.

Belongs to the protein kinase superfamily. Ser/Thr protein kinase family.

The catalysed reaction is L-seryl-[protein] + ATP = O-phospho-L-seryl-[protein] + ADP + H(+). It carries out the reaction L-threonyl-[protein] + ATP = O-phospho-L-threonyl-[protein] + ADP + H(+). This Phaseolus vulgaris (Kidney bean) protein is Protein kinase PVPK-1.